Reading from the N-terminus, the 325-residue chain is Glutarate 2-hydroxylase (325 aa).

Positions 160, 162, and 292 each coordinate Fe cation.

The protein belongs to the glutarate hydroxylase family. In terms of assembly, homotetramer. Fe(2+) is required as a cofactor.

The catalysed reaction is glutarate + 2-oxoglutarate + O2 = (S)-2-hydroxyglutarate + succinate + CO2. It functions in the pathway amino-acid degradation. In terms of biological role, acts as an alpha-ketoglutarate-dependent dioxygenase catalyzing hydroxylation of glutarate (GA) to L-2-hydroxyglutarate (L2HG). Functions in a L-lysine degradation pathway that proceeds via cadaverine, glutarate and L-2-hydroxyglutarate. The protein is Glutarate 2-hydroxylase of Escherichia coli (strain 55989 / EAEC).